A 70-amino-acid polypeptide reads, in one-letter code: MMFRLTSVSCFLLFIVFLNLVVLTNACIPEGTYCQFNADCCLSQCCWGSCGNPCRFPGKREKLQEFFRQR.

An N-terminal signal peptide occupies residues 1 to 26 (MMFRLTSVSCFLLFIVFLNLVVLTNA). Disulfide bonds link Cys27–Cys41, Cys34–Cys46, Cys40–Cys50, and Cys45–Cys54. Pro57 bears the Proline amide mark. A propeptide spanning residues 61 to 70 (EKLQEFFRQR) is cleaved from the precursor.

This sequence belongs to the conotoxin I2 superfamily. In terms of tissue distribution, expressed by the venom duct.

Its subcellular location is the secreted. The chain is Conotoxin Lt11.2 from Conus litteratus (Lettered cone).